A 613-amino-acid chain; its full sequence is UvrABC system protein C (613 aa).

Residues 20 to 98 (ERPGVYLMYD…IKRHKPRYNI (79 aa)) enclose the GIY-YIG domain. Residues 209–244 (FDVIESLGHKMQQASDEFEFEKAALYRDKISALRAI) form the UVR domain.

This sequence belongs to the UvrC family. Interacts with UvrB in an incision complex.

The protein resides in the cytoplasm. In terms of biological role, the UvrABC repair system catalyzes the recognition and processing of DNA lesions. UvrC both incises the 5' and 3' sides of the lesion. The N-terminal half is responsible for the 3' incision and the C-terminal half is responsible for the 5' incision. This is UvrABC system protein C from Hydrogenovibrio crunogenus (strain DSM 25203 / XCL-2) (Thiomicrospira crunogena).